A 94-amino-acid polypeptide reads, in one-letter code: ESAT-6-like protein EsxI (94 aa).

It belongs to the WXG100 family. ESAT-6 subfamily.

It localises to the secreted. The polypeptide is ESAT-6-like protein EsxI (Mycobacterium bovis (strain ATCC BAA-935 / AF2122/97)).